The following is a 39-amino-acid chain: Phosphatase RapI inhibitor (39 aa).

Residues 1–34 (MKISRILLAAVILSSVFSITYLQSDHNTEIKVAA) constitute a propeptide that is removed on maturation.

It belongs to the Phr family. Post-translationally, contains a predicted signal peptide cleavage site in the N-terminal region, however the propeptide is probably subject to only one processing event, at the N-terminal end of the mature peptide.

It localises to the secreted. Its subcellular location is the cytoplasm. In terms of biological role, intercellular signaling molecule that inhibits excision of the mobile genetic element ICEBs1 when cells are crowded by cells that contain ICEBs1 and produce the PhrI peptide. Secreted during production, but the mature peptide acts intracellularly, indicating that it needs to be imported into the cell to function. Acts by inhibiting RapI activity. This is Phosphatase RapI inhibitor (phrI) from Bacillus subtilis (strain 168).